The chain runs to 274 residues: 3-methyl-2-oxobutanoate hydroxymethyltransferase (274 aa).

Mg(2+) is bound by residues Asp44 and Asp83. 3-methyl-2-oxobutanoate-binding positions include 44 to 45, Asp83, and Lys113; that span reads DS. Glu115 is a binding site for Mg(2+). The Proton acceptor role is filled by Glu182.

This sequence belongs to the PanB family. In terms of assembly, homodecamer; pentamer of dimers. Mg(2+) is required as a cofactor.

The protein localises to the cytoplasm. It catalyses the reaction 3-methyl-2-oxobutanoate + (6R)-5,10-methylene-5,6,7,8-tetrahydrofolate + H2O = 2-dehydropantoate + (6S)-5,6,7,8-tetrahydrofolate. It participates in cofactor biosynthesis; (R)-pantothenate biosynthesis; (R)-pantoate from 3-methyl-2-oxobutanoate: step 1/2. Functionally, catalyzes the reversible reaction in which hydroxymethyl group from 5,10-methylenetetrahydrofolate is transferred onto alpha-ketoisovalerate to form ketopantoate. This chain is 3-methyl-2-oxobutanoate hydroxymethyltransferase, found in Campylobacter jejuni (strain RM1221).